Here is a 239-residue protein sequence, read N- to C-terminus: Protein Thf1 (239 aa).

A coiled-coil region spans residues 183-219 (ERVKKDLELYRSNLDRLKQARAIVEEMVKAARRQQER). Positions 211 to 221 (KAARRQQERRQ) are enriched in basic and acidic residues. The tract at residues 211–239 (KAARRQQERRQSTASLPETPAADRRESSG) is disordered.

This sequence belongs to the THF1 family.

Its function is as follows. May be involved in photosynthetic membrane biogenesis. This is Protein Thf1 from Synechococcus sp. (strain JA-3-3Ab) (Cyanobacteria bacterium Yellowstone A-Prime).